A 160-amino-acid chain; its full sequence is Sec-independent protein translocase protein TatB (160 aa).

Residues 1 to 21 form a helical membrane-spanning segment; that stretch reads MFGMGFFEILVVLIVAIIFLG. Residues 118-160 form a disordered region; sequence HLNEEVSNEEALNKEVSSDESPKEVQLTTDNNAKEHDKEKEHV. 2 stretches are compositionally biased toward basic and acidic residues: residues 128-140 and 149-160; these read ALNKEVSSDESPK and NAKEHDKEKEHV.

This sequence belongs to the TatB family. In terms of assembly, the Tat system comprises two distinct complexes: a TatABC complex, containing multiple copies of TatA, TatB and TatC subunits, and a separate TatA complex, containing only TatA subunits. Substrates initially bind to the TatABC complex, which probably triggers association of the separate TatA complex to form the active translocon.

Its subcellular location is the cell inner membrane. Part of the twin-arginine translocation (Tat) system that transports large folded proteins containing a characteristic twin-arginine motif in their signal peptide across membranes. Together with TatC, TatB is part of a receptor directly interacting with Tat signal peptides. TatB may form an oligomeric binding site that transiently accommodates folded Tat precursor proteins before their translocation. The protein is Sec-independent protein translocase protein TatB of Helicobacter pylori (strain J99 / ATCC 700824) (Campylobacter pylori J99).